Reading from the N-terminus, the 648-residue chain is PTS system N-acetylglucosamine-specific EIICBA component (648 aa).

The residue at position 1 (M1) is an N-formylmethionine. Residues 1 to 371 (MNILGFFQRL…FNLKTPGRED (371 aa)) enclose the PTS EIIC type-1 domain. A run of 12 helical transmembrane segments spans residues 16–36 (LPIA…PDLL), 38–58 (VAFI…IFAI), 70–90 (GAAA…MVTI), 92–112 (PEIN…GAAY), 132–152 (FVPI…GYVW), 159–179 (IHAG…IFGF), 192–212 (VLNT…GTVF), 232–252 (GFFP…YFAA), 260–280 (VGGM…TEPL), 282–302 (FLFM…TGIS), 303–323 (LFVA…GAID), and 339–359 (MLLV…SLVI). A PTS EIIB type-1 domain is found at 390–472 (TQLATNYIAA…KKVVARGPVA (83 aa)). C412 (phosphocysteine intermediate; for EIIB activity) is an active-site residue. The residue at position 412 (C412) is a Phosphocysteine; by EIIA. The PTS EIIA type-1 domain occupies 517 to 621 (DEAFASKAVG…SMISPVVCSN (105 aa)). Residues H554 and H569 each contribute to the Zn(2+) site. The active-site Tele-phosphohistidine intermediate; for EIIA activity is the H569. Position 569 is a phosphohistidine; by HPr (H569).

Zn(2+) serves as cofactor. In terms of processing, 60% of isolated protein was N-formylated.

It localises to the cell inner membrane. The enzyme catalyses N(pros)-phospho-L-histidyl-[protein] + N-acetyl-D-glucosamine(out) = N-acetyl-D-glucosamine 6-phosphate(in) + L-histidyl-[protein]. With respect to regulation, P-chloromercuribenzoate inhibits the accumulation of both N-acetyl-D-glucosamine and antibiotic streptozotocin (2-deoxy-2-(3-methyl-3-nitrosoureido)-D-glucopyranose). N-acetyl-D-glucosamine is a competitive inhibitor for the uptake of streptozotocin. The phosphoenolpyruvate-dependent sugar phosphotransferase system (sugar PTS), a major carbohydrate active transport system, catalyzes the phosphorylation of incoming sugar substrates concomitantly with their translocation across the cell membrane. This system is involved in N-acetylglucosamine transport. It can also transport and phosphorylate the antibiotic streptozotocin. Could play a significant role in the recycling of peptidoglycan. This chain is PTS system N-acetylglucosamine-specific EIICBA component, found in Escherichia coli (strain K12).